The chain runs to 361 residues: Phospho-N-acetylmuramoyl-pentapeptide-transferase (361 aa).

The next 10 membrane-spanning stretches (helical) occupy residues arginine 25–isoleucine 45, threonine 73–leucine 93, tyrosine 97–tryptophan 117, phenylalanine 132–alanine 152, threonine 167–glycine 187, glycine 200–alanine 220, valine 240–tyrosine 260, valine 264–isoleucine 284, isoleucine 289–valine 309, and glutamine 338–leucine 358.

The protein belongs to the glycosyltransferase 4 family. MraY subfamily. Mg(2+) serves as cofactor.

The protein resides in the cell inner membrane. The catalysed reaction is UDP-N-acetyl-alpha-D-muramoyl-L-alanyl-gamma-D-glutamyl-meso-2,6-diaminopimeloyl-D-alanyl-D-alanine + di-trans,octa-cis-undecaprenyl phosphate = di-trans,octa-cis-undecaprenyl diphospho-N-acetyl-alpha-D-muramoyl-L-alanyl-D-glutamyl-meso-2,6-diaminopimeloyl-D-alanyl-D-alanine + UMP. Its pathway is cell wall biogenesis; peptidoglycan biosynthesis. Functionally, catalyzes the initial step of the lipid cycle reactions in the biosynthesis of the cell wall peptidoglycan: transfers peptidoglycan precursor phospho-MurNAc-pentapeptide from UDP-MurNAc-pentapeptide onto the lipid carrier undecaprenyl phosphate, yielding undecaprenyl-pyrophosphoryl-MurNAc-pentapeptide, known as lipid I. The chain is Phospho-N-acetylmuramoyl-pentapeptide-transferase from Chromobacterium violaceum (strain ATCC 12472 / DSM 30191 / JCM 1249 / CCUG 213 / NBRC 12614 / NCIMB 9131 / NCTC 9757 / MK).